A 139-amino-acid chain; its full sequence is Trafficking protein particle complex subunit 2-like protein (139 aa).

This sequence belongs to the TRAPP small subunits family. Sedlin subfamily. Component of the multisubunit TRAPP (transport protein particle) complex, which includes at least TRAPPC2, TRAPPC2L, TRAPPC3, TRAPPC3L, TRAPPC4, TRAPPC5, TRAPPC8, TRAPPC9, TRAPPC10, TRAPPC11 and TRAPPC12. Interacts with the heterodimer TRAPPC3-TRAPPC6A.

The protein localises to the cytoplasm. It is found in the perinuclear region. The protein resides in the endoplasmic reticulum. It localises to the golgi apparatus. May play a role in vesicular transport from endoplasmic reticulum to Golgi. This is Trafficking protein particle complex subunit 2-like protein (TRAPPC2L) from Bos taurus (Bovine).